Reading from the N-terminus, the 344-residue chain is CRISPR-associated endonuclease Cas1 2 (344 aa).

Mn(2+) is bound by residues Glu167, His235, and Glu250.

It belongs to the CRISPR-associated endonuclease Cas1 family. As to quaternary structure, homodimer, forms a heterotetramer with a Cas2 homodimer. Requires Mg(2+) as cofactor. Mn(2+) is required as a cofactor.

In terms of biological role, CRISPR (clustered regularly interspaced short palindromic repeat), is an adaptive immune system that provides protection against mobile genetic elements (viruses, transposable elements and conjugative plasmids). CRISPR clusters contain spacers, sequences complementary to antecedent mobile elements, and target invading nucleic acids. CRISPR clusters are transcribed and processed into CRISPR RNA (crRNA). Acts as a dsDNA endonuclease. Involved in the integration of spacer DNA into the CRISPR cassette. The chain is CRISPR-associated endonuclease Cas1 2 from Rhodospirillum rubrum (strain ATCC 11170 / ATH 1.1.1 / DSM 467 / LMG 4362 / NCIMB 8255 / S1).